Here is a 309-residue protein sequence, read N- to C-terminus: Taste receptor type 2 member 31 (309 aa).

Residues 1 to 2 (MI) lie on the Extracellular side of the membrane. Residues 3–23 (TFLPTIFSILVVVIFVIGNFG) traverse the membrane as a helical segment. Residues 24–55 (NGFIALVNSIEWVKRQKISFADQILTALAVSR) are Cytoplasmic-facing. The chain crosses the membrane as a helical span at residues 56 to 76 (VGLLWALLLNWYSTVFNPAFY). The Extracellular portion of the chain corresponds to 77 to 100 (SVGVRTTVYDVWTVTGHFSNWLAT). The chain crosses the membrane as a helical span at residues 101-121 (SLSIFYLLKIANFSNLIFLHL). Topologically, residues 122-126 (KRRVK) are cytoplasmic. The chain crosses the membrane as a helical span at residues 127-147 (SVILVMLLGPLLFLACQLFVI). Residues 148-181 (NMKEILRTKEYEGNMTWKIKLRSAMYLSDATITT) are Extracellular-facing. Asn-161 is a glycosylation site (N-linked (GlcNAc...) asparagine). The chain crosses the membrane as a helical span at residues 182–202 (LANLVPFTLTLLSFLLLICSL). Over 203–229 (CKHLNKMQLHGKGSQDPSTKVHIKVLQ) the chain is Cytoplasmic. The chain crosses the membrane as a helical span at residues 230–250 (TVISFLLLCAIYFLSIMISVW). The Extracellular segment spans residues 251–259 (SFGSLENKP). Residues 260 to 280 (VFMFCKAIRFSYPSIHPFILI) form a helical membrane-spanning segment. Over 281 to 309 (WGNKKLKQTFLSVLRQVRYWVKGEKPSSP) the chain is Cytoplasmic.

It belongs to the G-protein coupled receptor T2R family.

The protein localises to the membrane. Receptor that may play a role in the perception of bitterness and is gustducin-linked. May play a role in sensing the chemical composition of the gastrointestinal content. The activity of this receptor may stimulate alpha gustducin, mediate PLC-beta-2 activation and lead to the gating of TRPM5. This chain is Taste receptor type 2 member 31 (TAS2R31), found in Pongo pygmaeus (Bornean orangutan).